We begin with the raw amino-acid sequence, 122 residues long: UPF0231 protein VP2494 (122 aa).

Belongs to the UPF0231 family.

The protein is UPF0231 protein VP2494 of Vibrio parahaemolyticus serotype O3:K6 (strain RIMD 2210633).